The following is a 286-amino-acid chain: Hypersensitive-induced response protein 1 (286 aa).

G2 carries N-myristoyl glycine lipidation. A coiled-coil region spans residues 114–190; it reads LDDVFEQKND…EKILQIKRAE (77 aa).

As to quaternary structure, self-interacts and forms heteromers. Interacts with NB-LRR class of R proteins before R proteins (e.g. RPS2 or RPM1) are activated by the effectors. Interacts with LRR1.

It is found in the cell membrane. Functionally, positive regulator of hypersensitive response (HR)-like cell death. May be involved in potassium ion channel regulation. The sequence is that of Hypersensitive-induced response protein 1 from Arabidopsis thaliana (Mouse-ear cress).